The chain runs to 179 residues: Probable galaptin lec-7 (179 aa).

The 128-residue stretch at serine 11–lysine 138 folds into the Galectin domain.

This Caenorhabditis elegans protein is Probable galaptin lec-7 (lec-7).